A 197-amino-acid polypeptide reads, in one-letter code: Fucoxanthin-chlorophyll a-c binding protein C, chloroplastic (197 aa).

The transit peptide at 1–31 (MKTAVIASLIAGAAAFAPAKNAARTSVATNM) directs the protein to the chloroplast. Helical transmembrane passes span 73–94 (ISML…PGTI), 113–133 (IPAG…SSVM), and 174–196 (GRAA…SLLP).

It belongs to the fucoxanthin chlorophyll protein family. The LHC complex of chromophytic algae is composed of fucoxanthin, chlorophyll A and C bound non-covalently by fucoxanthin chlorophyll proteins (FCPs). The ratio of the pigments in LHC; fucoxanthin: chlorophyll C: chlorophyll A; (0.6-1): (0.1-0.3): (1).

It is found in the plastid. It localises to the chloroplast thylakoid membrane. Functionally, the light-harvesting complex (LHC) functions as a light receptor, it captures and delivers excitation energy to photosystems with which it is closely associated. Energy is transferred from the carotenoid and chlorophyll C (or B) to chlorophyll A and the photosynthetic reaction centers where it is used to synthesize ATP and reducing power. The sequence is that of Fucoxanthin-chlorophyll a-c binding protein C, chloroplastic (FCPC) from Phaeodactylum tricornutum (Diatom).